The primary structure comprises 423 residues: Glutamyl-tRNA reductase (423 aa).

Substrate is bound by residues 49 to 52 (TCNR), Ser-111, 116 to 118 (EPQ), and Gln-122. The Nucleophile role is filled by Cys-50. Position 191-196 (191-196 (GAGEMS)) interacts with NADP(+).

This sequence belongs to the glutamyl-tRNA reductase family. In terms of assembly, homodimer.

The catalysed reaction is (S)-4-amino-5-oxopentanoate + tRNA(Glu) + NADP(+) = L-glutamyl-tRNA(Glu) + NADPH + H(+). It participates in porphyrin-containing compound metabolism; protoporphyrin-IX biosynthesis; 5-aminolevulinate from L-glutamyl-tRNA(Glu): step 1/2. Catalyzes the NADPH-dependent reduction of glutamyl-tRNA(Glu) to glutamate 1-semialdehyde (GSA). This is Glutamyl-tRNA reductase from Syntrophus aciditrophicus (strain SB).